The chain runs to 151 residues: Protein E6 (151 aa).

2 zinc fingers span residues 30 to 66 and 103 to 139; these read CVYC…CKQC and CHRC…CANC. Positions 149–151 match the PDZ-binding domain motif; the sequence is TQV.

Belongs to the papillomaviridae E6 protein family. In terms of assembly, forms homodimers. Interacts with ubiquitin-protein ligase UBE3A/E6-AP and thus forms a complex with human TP53. Interacts with human NFX1 and MAGI3. Interacts with human IRF3; this interaction inhibits the establishment of antiviral state. Interacts with human TYK2; this interaction inhibits JAK-STAT activation by interferon alpha. Interacts with host DLG1; this interaction leads to the proteasomal degradation of DLG1.

Its subcellular location is the host cytoplasm. The protein resides in the host nucleus. Its function is as follows. Plays a major role in the induction and maintenance of cellular transformation. Acts mainly as an oncoprotein by stimulating the destruction of many host cell key regulatory proteins. E6 associates with host UBE3A/E6-AP ubiquitin-protein ligase, and inactivates tumor suppressors TP53 and TP73 by targeting them to the 26S proteasome for degradation. In turn, DNA damage and chromosomal instabilities increase and lead to cell proliferation and cancer development. The complex E6/E6AP targets several other substrates to degradation via the proteasome including host DLG1 or NFX1, a repressor of human telomerase reverse transcriptase (hTERT). The resulting increased expression of hTERT prevents the shortening of telomere length leading to cell immortalization. Other cellular targets including BAK1, Fas-associated death domain-containing protein (FADD) and procaspase 8, are degraded by E6/E6AP causing inhibition of apoptosis. E6 also inhibits immune response by interacting with host IRF3 and TYK2. These interactions prevent IRF3 transcriptional activities and inhibit TYK2-mediated JAK-STAT activation by interferon alpha resulting in inhibition of the interferon signaling pathway. The protein is Protein E6 of Human papillomavirus 51.